We begin with the raw amino-acid sequence, 504 residues long: UDP-N-acetylmuramoylalanine--D-glutamate ligase (504 aa).

Residue 129–135 (GTNGKTT) coordinates ATP.

It belongs to the MurCDEF family.

The protein resides in the cytoplasm. The enzyme catalyses UDP-N-acetyl-alpha-D-muramoyl-L-alanine + D-glutamate + ATP = UDP-N-acetyl-alpha-D-muramoyl-L-alanyl-D-glutamate + ADP + phosphate + H(+). Its pathway is cell wall biogenesis; peptidoglycan biosynthesis. Its function is as follows. Cell wall formation. Catalyzes the addition of glutamate to the nucleotide precursor UDP-N-acetylmuramoyl-L-alanine (UMA). The protein is UDP-N-acetylmuramoylalanine--D-glutamate ligase of Cupriavidus metallidurans (strain ATCC 43123 / DSM 2839 / NBRC 102507 / CH34) (Ralstonia metallidurans).